The sequence spans 296 residues: Putative gluconeogenesis factor (296 aa).

This sequence belongs to the gluconeogenesis factor family.

Its subcellular location is the cytoplasm. In terms of biological role, required for morphogenesis under gluconeogenic growth conditions. This is Putative gluconeogenesis factor from Vibrio cholerae serotype O1 (strain ATCC 39315 / El Tor Inaba N16961).